Reading from the N-terminus, the 354-residue chain is tRNA pseudouridine synthase D (354 aa).

Residue D86 is the Nucleophile of the active site. A TRUD domain is found at G162–L309.

This sequence belongs to the pseudouridine synthase TruD family.

It catalyses the reaction uridine(13) in tRNA = pseudouridine(13) in tRNA. Its function is as follows. Responsible for synthesis of pseudouridine from uracil-13 in transfer RNAs. The chain is tRNA pseudouridine synthase D from Methylococcus capsulatus (strain ATCC 33009 / NCIMB 11132 / Bath).